Consider the following 946-residue polypeptide: Clumping factor A (946 aa).

The first 39 residues, 1–39 (MNMKKKEKHAIRKKSIGVASVLVGTLIGFGLLSSKEADA), serve as a signal peptide directing secretion. The YSIRK-G/S signaling motif signature appears at 9 to 20 (HAIRKKSIGVAS). Disordered stretches follow at residues 34 to 199 (SKEA…SNKD) and 528 to 917 (FNNG…SEDE). The segment at 40 to 542 (SENSVTQSDS…GSGDGIDKPV (503 aa)) is ligand binding A region. Positions 47 to 65 (SDSASNESKSNDSSSVSAA) are enriched in low complexity. Residues 71–111 (TNVSDTKTSSNTNNGETSVAQNPAQQETTQSALTNATTEET) show a composition bias toward polar residues. Low complexity-rich tracts occupy residues 117–131 (ATTA…ATTQ) and 142–161 (NQTS…SVNS). A compositionally biased stretch (polar residues) spans 162-199 (PQNSTNAENVSTTQDTSTEATPSNNESAPQSTDASNKD). The segment covering 546 to 564 (QPDEPGEIEPIPEDSDSDP) has biased composition (acidic residues). Over residues 565–597 (GSDSGSDSNSDSGSDSGSDSTSDSGSDSASDSD) the composition is skewed to low complexity. Positions 598–874 (SASDSDSASD…DSDSESDSNS (277 aa)) are enriched in acidic residues. Over residues 875–893 (DSESGSNNNVVPPNSPKNG) the composition is skewed to low complexity. Basic and acidic residues predominate over residues 900 to 909 (NEAKDSKEPL). Residues 909-913 (LPDTG) carry the LPXTG sorting signal motif. The residue at position 912 (threonine 912) is a Pentaglycyl murein peptidoglycan amidated threonine. A propeptide spans 913 to 946 (GSEDEANTSLIWGLLASIGSLLLFRRKKENKDKK) (removed by sortase).

This sequence belongs to the serine-aspartate repeat-containing protein (SDr) family.

It localises to the secreted. The protein resides in the cell wall. Cell surface-associated protein implicated in virulence. Promotes bacterial attachment exclusively to the gamma-chain of human fibrinogen. Induces formation of bacterial clumps. The chain is Clumping factor A (clfA) from Staphylococcus aureus (strain MW2).